The chain runs to 710 residues: Secretin OutD (710 aa).

The first 27 residues, M1–A27, serve as a signal peptide directing secretion. Residues A28 to S105 are N0. The N1 stretch occupies residues I123–G190. An N2 region spans residues R192–K262. Residues G288–Q399 are N3. The disordered stretch occupies residues N289–G353. The tract at residues L401–R648 is secretin. The tract at residues T691 to R710 is s domain.

The protein belongs to the bacterial secretin family. GSP D subfamily. Forms a cylindrical channel with 15 subunits. Interacts with pilotin OutS.

The protein localises to the cell outer membrane. In terms of biological role, involved in a type II secretion system (T2SS, formerly general secretion pathway, GSP) for the export of proteins. Required for the translocation of the multiple pectic enzymes. This subunit forms the outer membrane channel. This chain is Secretin OutD (outD), found in Dickeya dadantii (strain 3937) (Erwinia chrysanthemi (strain 3937)).